Here is a 296-residue protein sequence, read N- to C-terminus: Bifunctional protein FolD (296 aa).

NADP(+) contacts are provided by residues 166-168 (GRS), serine 195, and threonine 236.

It belongs to the tetrahydrofolate dehydrogenase/cyclohydrolase family. Homodimer.

The catalysed reaction is (6R)-5,10-methylene-5,6,7,8-tetrahydrofolate + NADP(+) = (6R)-5,10-methenyltetrahydrofolate + NADPH. It catalyses the reaction (6R)-5,10-methenyltetrahydrofolate + H2O = (6R)-10-formyltetrahydrofolate + H(+). It functions in the pathway one-carbon metabolism; tetrahydrofolate interconversion. Functionally, catalyzes the oxidation of 5,10-methylenetetrahydrofolate to 5,10-methenyltetrahydrofolate and then the hydrolysis of 5,10-methenyltetrahydrofolate to 10-formyltetrahydrofolate. The polypeptide is Bifunctional protein FolD (Dehalococcoides mccartyi (strain CBDB1)).